Reading from the N-terminus, the 98-residue chain is Large ribosomal subunit protein uL23 (98 aa).

It belongs to the universal ribosomal protein uL23 family. In terms of assembly, part of the 50S ribosomal subunit. Contacts protein L29, and trigger factor when it is bound to the ribosome.

Its function is as follows. One of the early assembly proteins it binds 23S rRNA. One of the proteins that surrounds the polypeptide exit tunnel on the outside of the ribosome. Forms the main docking site for trigger factor binding to the ribosome. The chain is Large ribosomal subunit protein uL23 from Streptococcus sanguinis (strain SK36).